Consider the following 1328-residue polypeptide: Peroxidasin homolog pxn-2 (1328 aa).

An N-terminal signal peptide occupies residues 1 to 16; it reads MLLEFLLLIGISLSTA. One can recognise an LRRNT domain in the interval 17–45; the sequence is CPSECRCAGLDVHCEGKNLTAIPGHIPIA. The N-linked (GlcNAc...) asparagine glycan is linked to Asn34. 6 LRR repeats span residues 42–66, 67–90, 92–114, 116–137, 138–161, and 164–191; these read IPIATTNLYFSNNLLNSLSKSNFQA, LPNLQYLDLSNNSIRDIEETLLDS, PGLKYLDLSWNKIRYVPKLSTAP, ALVSLNLVHNEISRLDNDLVSH, SPYMQTFLIQRNRIQSLPHDFFNS, and VPTLKTVKMAGNPWSCDCRMVNVKQFAD. A glycan (N-linked (GlcNAc...) asparagine) is linked at Asn77. Residue Asn220 is glycosylated (N-linked (GlcNAc...) asparagine). A disordered region spans residues 305–332; the sequence is KKMQASSSTEPPITTTTMEPMTTSTMDS. Positions 310–332 are enriched in low complexity; it reads SSSTEPPITTTTMEPMTTSTMDS. Ig-like C2-type domains follow at residues 346–438 and 445–532; these read PEID…FSVS and PVII…ANLL. Cysteines 373 and 422 form a disulfide. N-linked (GlcNAc...) asparagine glycosylation is found at Asn403 and Asn455. Cys466 and Cys516 are joined by a disulfide. N-linked (GlcNAc...) asparagine glycosylation is present at Asn630. A disulfide bond links Cys660 and Cys676. Asp754 lines the heme b pocket. His755 acts as the Proton acceptor in catalysis. Asp756 provides a ligand contact to Ca(2+). Disulfide bonds link Cys775/Cys785 and Cys779/Cys807. Asn776 carries N-linked (GlcNAc...) asparagine glycosylation. Ca(2+) contacts are provided by Thr839, Tyr841, Asp843, and Ser845. N-linked (GlcNAc...) asparagine glycosylation is present at Asn894. The heme b site is built by Glu913 and His1008. An LRR 7 repeat occupies 1085–1109; sequence ALDLAALNIQRGRDHGLPSWTEYRK. 2 disulfides stabilise this stretch: Cys1111-Cys1168 and Cys1209-Cys1236. 2 N-linked (GlcNAc...) asparagine glycosylation sites follow: Asn1112 and Asn1128. The stretch at 1204–1225 is one LRR 8 repeat; sequence LSKIICTNGDDIDRIQRDIFVY. Asn1228 carries N-linked (GlcNAc...) asparagine glycosylation. The tract at residues 1266–1297 is disordered; that stretch reads IGGDEKAKRRKRRHHHSKKSCHDKGKRRKSGD. Residues 1273–1295 show a composition bias toward basic residues; that stretch reads KRRKRRHHHSKKSCHDKGKRRKS. An N-linked (GlcNAc...) asparagine glycan is attached at Asn1300.

Belongs to the peroxidase family. XPO subfamily. Ca(2+) is required as a cofactor. Heme b serves as cofactor. As to expression, expressed in vulval muscles and in some neurons including PVQ. Expressed in the hypodermis and in coelomocytes.

The protein localises to the secreted. It is found in the extracellular space. Its subcellular location is the extracellular matrix. The protein resides in the basement membrane. The enzyme catalyses L-lysyl-[collagen] + L-methionyl-[collagen] + H2O2 = [collagen]-L-lysyl-N-S-L-methionyl-[collagen] + 2 H2O + H(+). It catalyses the reaction bromide + H2O2 = hypobromite + H2O. The catalysed reaction is L-lysyl-[collagen] + L-methionyl-[collagen] + hypobromite = [collagen]-L-lysyl-N-S-L-methionyl-[collagen] + bromide + H2O + H(+). It carries out the reaction L-tyrosyl-[protein] + bromide + H2O2 + H(+) = 3-bromo-L-tyrosyl-[protein] + 2 H2O. The enzyme catalyses hypobromite + L-tyrosyl-[protein] + H(+) = 3-bromo-L-tyrosyl-[protein] + H2O. Its function is as follows. Catalyzes the two-electron oxidation of bromide by hydrogen peroxide and generates hypobromite as a reactive intermediate which mediates the formation of sulfilimine cross-links between methionine and hydroxylysine residues within an uncross-linked collagen IV/COL4A1 NC1 hexamer. Required for embryonic morphogenesis playing a role in epidermal elongation at the twofold stage of embryonic development. Required post-embryonically for basement membrane integrity and muscle-epidermal attachments, and specifically in the function of basement membrane components such as the type IV collagens. May have a role in inhibiting axon regeneration. May functionally antagonize the peroxidasin pxn-1. The sequence is that of Peroxidasin homolog pxn-2 from Caenorhabditis elegans.